We begin with the raw amino-acid sequence, 437 residues long: AA9 family lytic polysaccharide monooxygenase H (437 aa).

A signal peptide spans 1–21; sequence MNLSLFTLALVACYSSQLAAA. Residue His-22 participates in Cu(2+) binding. Cys-64 and Cys-193 are oxidised to a cystine. 2 N-linked (GlcNAc...) asparagine glycosylation sites follow: Asn-67 and Asn-79. Residue His-104 participates in Cu(2+) binding. Asn-120 and Asn-138 each carry an N-linked (GlcNAc...) asparagine glycan. O2 contacts are provided by His-178 and Gln-188. Tyr-190 serves as a coordination point for Cu(2+). Asn-252 and Asn-307 each carry an N-linked (GlcNAc...) asparagine glycan. The region spanning 392–437 is the Chitin-binding type-1 domain; it reads DGKCGDGNGQTCKGSLLGECCSQVGYCGSSESYCGVGCQGNFGVCG. Intrachain disulfides connect Cys-395–Cys-412, Cys-403–Cys-418, Cys-411–Cys-425, and Cys-429–Cys-436.

The protein belongs to the polysaccharide monooxygenase AA9 family. The cofactor is Cu(2+).

The protein localises to the secreted. It catalyses the reaction [(1-&gt;4)-beta-D-glucosyl]n+m + reduced acceptor + O2 = 4-dehydro-beta-D-glucosyl-[(1-&gt;4)-beta-D-glucosyl]n-1 + [(1-&gt;4)-beta-D-glucosyl]m + acceptor + H2O.. Lytic polysaccharide monooxygenase (LPMO) that depolymerizes crystalline and amorphous polysaccharides via the oxidation of scissile alpha- or beta-(1-4)-glycosidic bonds, yielding C1 and C4 oxidation products. Catalysis by LPMOs requires the reduction of the active-site copper from Cu(II) to Cu(I) by a reducing agent and H(2)O(2) or O(2) as a cosubstrate. The chain is AA9 family lytic polysaccharide monooxygenase H from Botryotinia fuckeliana (strain B05.10) (Noble rot fungus).